Consider the following 354-residue polypeptide: Transcription activator of gluconeogenesis ERT1-1 (354 aa).

The interval 1 to 29 (MSFYPILRGPAKQESPPPPPAPKKRRKTA) is disordered. Positions 32-60 (CLHCQKAHLTCDEGRPCARCIKKNMGDQC) form a DNA-binding region, zn(2)-C6 fungal-type. 2 disordered regions span residues 71–111 (LVGL…FGSS) and 128–169 (DTSS…QGSP). Over residues 81–98 (QATQQKQQQQQQQQQAVQ) the composition is skewed to low complexity. Over residues 159–169 (SQTAGTPQGSP) the composition is skewed to polar residues.

The protein belongs to the ERT1/acuK family.

The protein resides in the nucleus. Transcription factor which regulates nonfermentable carbon utilization. Activator of gluconeogenetic genes. In Yarrowia lipolytica (strain CLIB 122 / E 150) (Yeast), this protein is Transcription activator of gluconeogenesis ERT1-1 (ERT1-1).